The sequence spans 145 residues: MKEVVIYTDGACSKNPGPGGWCAILIYKGIKKVLKGFEENTTNNRMELKAIIEGLKALKEPCKVTVYTDSAYIVNAINQNWIGKWQKNNWKTSEKEEVKNIDLWQELLEFLKVHNVKFEKVKGHSTDTLNNMCDEIARSMIKEMR.

The RNase H type-1 domain occupies 1-142; it reads MKEVVIYTDG…CDEIARSMIK (142 aa). Residues aspartate 9, glutamate 47, aspartate 69, and aspartate 134 each coordinate Mg(2+).

It belongs to the RNase H family. In terms of assembly, monomer. It depends on Mg(2+) as a cofactor.

The protein resides in the cytoplasm. It catalyses the reaction Endonucleolytic cleavage to 5'-phosphomonoester.. Functionally, endonuclease that specifically degrades the RNA of RNA-DNA hybrids. This Caldicellulosiruptor saccharolyticus (strain ATCC 43494 / DSM 8903 / Tp8T 6331) protein is Ribonuclease H.